The sequence spans 383 residues: Chitinase-3-like protein 1 (383 aa).

Residues 1 to 21 (MGLRVAQTGFVALVLLQSCAA) form the signal peptide. In terms of domain architecture, GH18 spans 22-383 (YKLVCYYTSW…SAIKDVLAAA (362 aa)). Cys-26 and Cys-51 are joined by a disulfide. The N-linked (GlcNAc...) asparagine glycan is linked to Asn-60. Chitin-binding positions include 70–71 (EW), 97–100 (GGWN), Tyr-141, 204–207 (LTYD), and Arg-263. Cys-300 and Cys-364 are disulfide-bonded. The segment at 324-338 (QWVGYDDQESVKNKA) is important for AKT1 activation and IL8 production. Residue Trp-352 participates in chitin binding.

It belongs to the glycosyl hydrolase 18 family. In terms of assembly, monomer. As to expression, detected in smooth muscle cells in atherosclerotic plaques. Detected in regions of vascular occlusion in the aorta.

The protein resides in the secreted. Its subcellular location is the extracellular space. It is found in the cytoplasm. It localises to the perinuclear region. The protein localises to the endoplasmic reticulum. Its function is as follows. Carbohydrate-binding lectin with a preference for chitin. Has no chitinase activity. May play a role in tissue remodeling and in the capacity of cells to respond to and cope with changes in their environment. Plays a role in T-helper cell type 2 (Th2) inflammatory response and IL-13-induced inflammation, regulating allergen sensitization, inflammatory cell apoptosis, dendritic cell accumulation and M2 macrophage differentiation. Facilitates invasion of pathogenic enteric bacteria into colonic mucosa and lymphoid organs. Mediates activation of AKT1 signaling pathway and subsequent IL8 production in colonic epithelial cells. Regulates antibacterial responses in lung by contributing to macrophage bacterial killing, controlling bacterial dissemination and augmenting host tolerance. Also regulates hyperoxia-induced injury, inflammation and epithelial apoptosis in lung. Stimulates migration and adhesion of cultured vascular smooth muscle cells. In Sus scrofa (Pig), this protein is Chitinase-3-like protein 1 (CHI3L1).